The chain runs to 363 residues: NAD(P)H-quinone oxidoreductase subunit 1, chloroplastic (363 aa).

The next 6 membrane-spanning stretches (helical) occupy residues 27–47 (IWLFIPIFTPVSGITIGVLVI), 98–118 (FSIGPSVVVISILLSHLVIPF), 127–147 (LSIGVSLWIAISSIAPIGLLM), 248–268 (YSGIKFGLFYLASYLNLLVSS), 300–320 (VFGTTISIFFTLAKAYLFLFI), and 336–356 (LLNLGWKFLLPIALGNLLLTT).

This sequence belongs to the complex I subunit 1 family. In terms of assembly, NDH is composed of at least 16 different subunits, 5 of which are encoded in the nucleus.

The protein resides in the plastid. It is found in the chloroplast thylakoid membrane. The enzyme catalyses a plastoquinone + NADH + (n+1) H(+)(in) = a plastoquinol + NAD(+) + n H(+)(out). It carries out the reaction a plastoquinone + NADPH + (n+1) H(+)(in) = a plastoquinol + NADP(+) + n H(+)(out). In terms of biological role, NDH shuttles electrons from NAD(P)H:plastoquinone, via FMN and iron-sulfur (Fe-S) centers, to quinones in the photosynthetic chain and possibly in a chloroplast respiratory chain. The immediate electron acceptor for the enzyme in this species is believed to be plastoquinone. Couples the redox reaction to proton translocation, and thus conserves the redox energy in a proton gradient. This is NAD(P)H-quinone oxidoreductase subunit 1, chloroplastic from Amborella trichopoda.